The primary structure comprises 255 residues: Imidazole glycerol phosphate synthase subunit HisF (255 aa).

Residues Asp-11 and Asp-130 contribute to the active site.

It belongs to the HisA/HisF family. In terms of assembly, heterodimer of HisH and HisF.

Its subcellular location is the cytoplasm. It carries out the reaction 5-[(5-phospho-1-deoxy-D-ribulos-1-ylimino)methylamino]-1-(5-phospho-beta-D-ribosyl)imidazole-4-carboxamide + L-glutamine = D-erythro-1-(imidazol-4-yl)glycerol 3-phosphate + 5-amino-1-(5-phospho-beta-D-ribosyl)imidazole-4-carboxamide + L-glutamate + H(+). Its pathway is amino-acid biosynthesis; L-histidine biosynthesis; L-histidine from 5-phospho-alpha-D-ribose 1-diphosphate: step 5/9. Its function is as follows. IGPS catalyzes the conversion of PRFAR and glutamine to IGP, AICAR and glutamate. The HisF subunit catalyzes the cyclization activity that produces IGP and AICAR from PRFAR using the ammonia provided by the HisH subunit. This is Imidazole glycerol phosphate synthase subunit HisF from Prochlorococcus marinus subsp. pastoris (strain CCMP1986 / NIES-2087 / MED4).